Here is a 2800-residue protein sequence, read N- to C-terminus: MEVIKKEKKDKEKKDKEEKKDKEKKDKSEKKEKKDKEKKEKEKKEKKEKEKEKEKDKEKDGGLFSIVGGWVGNLTEPTPPPPPPPSSVSAQSTAEANAILLNPTTQENHKKAMDFWVTNTSTTTTTTTTTSSNNIPSLVSVQNNNTSNNNINNNNKTSNTTGSNVSSSNNKETVKINVTSLDSGGNNNASGKDISNEHSPKNRKEKEKEKDKDNKEDSINESPVDENRRKLVEGFMKSLQGCSDAIKVILDVFYQPLKKADLLSQEELKAIFSLIESISSFQQTILIDFKKYISNWNSTTQAQLHSTFLQFVGYLKLYKVYGLQYNYSLSSLCLLMFDNQRFESFINNAESKLVNEHKYSLAPLVPTSSSSSCVKPVSLSEILGSQYDQTTSQSTNNSSGSSFPAVTLRRTGHTFTGINSANSNNNNNNSGGGSSGINNSNSVTGKFTQEYTYSNLASLLILPIHFLARFHQFFKSLIDSIAVLNPDYKPYNNLYKQIVQVVKDIVNESVNINKVISISKSIKSPTIGLFNSSDIVQNRKFLKEGILIEQFNNQRISYYTFLFSDIILFTEKIEDTSTINNNTMMAYDGSFYLLKKLERIVNIQVDDPELGFEYRKGFQIKTKESSIFYMTSSEKEKSTWFQVLSQASLKSNQNQNQNQNNLTNSYSSTVAGGRNSTIGLGGIDDFNNNNNGNNNGSNNDDGPDEFEDAKDIALFCKMIISGQRPKVELTSQMLKISDPKPLFAALASTHFVNQLIFIPLTMNDKYMQMTLGMMSLNKSITHLTLSQNSINDPCAVALGDMLRYNHSLIQMDLSENTIADKGLISLIDGILSHPSITVVILTQNQITDTGAKHISKLLKFNQTLNALFLEDNNITQSMGAEIIDQWVSCHSTVLSRITLPSIPPEYSDRIKLKAISVTNRLDKKKKQLQVNQKSTTPSTSTSTTSSTIINNNKGLLDLGSCDYSEISLQLLNKLNMLSLDSRRISDLKELYLDHNCISSIPVSILKELKNLQILDLSNNQLSSLPSEISEMKELKLLNVSHNNLSSLPIELGTLCKLNHLDISFNFIETINVNSLSQLVNLKVLMMQRNYFNRLPIEIFTRLKSLESFSIAGSPCFHPIKQRIYEAIAIKATKLDLSDCGLSALPIEIGSISSLIELDLTNNRIKDLPPQIGKLSSLQTLNLSNNAIESLPWQLSQLTTLKVLNITGNPISFDGASNAKISIPDVLSGDDLIGILKYLKLASTKEKPCMRMKLMLVGQENVGKTSIAKCLKKEIIPVGKKLRQTIGLGTKKSKTPTLTEANGSIDFNAPQSINPLNTSLNISTDGINMDDWRPPSEDQSPPVTFSIWDFAGQEVYYSTHQFFISSRSVFIVVFDMSVYNPDETSRVPYWLQCIEAFGGNSPVILVGTHLDDLPNGVDVNQITQDIHSKYFTKFPNVKFFLPVSCKSGKNINKLQNHIVKLGKAEKKLGDLFSRSYFQLENLILSEREMNTPPIITLSEFTEMAISCGIPQTSITAAADFLKELGVIVYFDDPKSGLDQFIFIDPPWLTRLMATIITSKPNFVQSGVLDQSNLHQIWKPPDFPQHLHHVLLAILQKFEIVHPLPDPKATISSSSSSPSTTQKSLNNSGSNLKSSGSAISTSSSSTTNGNKTLHRTNSTTNTTSLLNVSRFGNGSISKGSSLSIIKKINDQSTSPSNSTTPSPNTSSNNFSDSITLVPKSSTKHLVPILLSEERPNSIEKLYDQILLKSQQQQPFLERIYQFEFLPIGFFSKLMIRTMHFTTVKEFWKNGLLVEKDDSQCLIESIQQFNQINFKAWGKNPASLLRFIIETAEVLISGWYKLHFHFLVPCNCINCNSILISNIGSINIINSTINLSSNNNNNVNIVNMSQQQHHQQQQSPSTSTSSSSSLTSSQPSLSTPLTSSQPSLSTSQPQLSTTTTTTATTTTSSSSQSLASQQSSSQIQLTHSSSLSSMSGSISTNSLNSNVSSSSSTPSLLSPPLLNPDSTSSSNETSGDILDLDFADYYDGESVSPGGTLKGKRKKNPSKFLTLYRNTNKPKINGTTGSGSSSSIVTTAVSSSSSSSSSTSLSNTSSRQLDLSKISHLINQQLSFGPSKTQDLRTMFLYEEIERIFLSKKFEVVCRSSITGEETIVRLDSLVPELMMSDIGPNFTLEYKDLEIIEKVGEGGFGIVYKGKLRGQLVAIKQITIDSGQAEAASEIYREFRREVWLSNTLTHPSIVSLKGYCLDPCCIVMEYIPNGTLYSHLRKSFSSITWQLKLKIAINIADAIKHMHGFTPKICHRDLKSPNILMLSDMNAAVVCKVSDFGETRAVVTSALGRDKLSNPIWLSPEIMRGDEYTEKADVYSFGIVLWEILTGLLPFDEYPVAHSSFMYQLEDEITNGLRPTIPQNSVCGHPDFITLITDCWQNDPLKRPTFIDIHSRLLIMSGLNPATATTTNSAKSTISTGFNSNSGATTTTKPKSSTISSGSGTTSPPQPHPQLVRKLTQNFTPIATSPTPSVIVSSVPTTTTTTTTSVATTPTVQTILAGGNITPKPSVPTAMKPNITPKPTLISSQKPPAPNPVPILKTPTPTNLSPTSISTPTTPTTPTTPTTPTTPTNSTSSNLKPTPTSKSNPSSPPQIATTATATQTPTPSPISVLKPPRSLPQKPVGTTQTTSTPPTNQTPNPTIVTRPPLPSSLSSNSINKPPSKPLPTPGGVTSPPPPPTTSSTTPIKFNSISAGNKTIGQSSTLPSSTLKQFTANNNTSPSGSSSLPNSTVSSPSSSFLLRPTGGTISKKLPAIPK.

Over residues 1-61 (MEVIKKEKKD…EKEKDKEKDG (61 aa)) the composition is skewed to basic and acidic residues. Disordered stretches follow at residues 1–92 (MEVI…SAQS), 123–225 (TTTT…SPVD), and 417–437 (GINSANSNNNNNNSGGGSSGI). Over residues 77–86 (PTPPPPPPPS) the composition is skewed to pro residues. Composition is skewed to low complexity over residues 123 to 134 (TTTTTTTTSSNN) and 143 to 170 (NNNTSNNNINNNNKTSNTTGSNVSSSNN). Residues 176–190 (INVTSLDSGGNNNAS) show a composition bias toward polar residues. Basic and acidic residues predominate over residues 194–218 (ISNEHSPKNRKEKEKEKDKDNKEDS). The region spanning 227–508 (NRRKLVEGFM…VQVVKDIVNE (282 aa)) is the DH domain. The span at 417–429 (GINSANSNNNNNN) shows a compositional bias: low complexity. Positions 540–649 (KFLKEGILIE…WFQVLSQASL (110 aa)) constitute a PH domain. 4 LRR repeats span residues 777-800 (NKSITHLTLSQNSINDPCAVALGD), 805-832 (NHSLIQMDLSENTIADKGLISLIDGILS), 834-856 (PSITVVILTQNQITDTGAKHISK), and 861-885 (NQTLNALFLEDNNITQSMGAEIIDQ). Residues 926-946 (KQLQVNQKSTTPSTSTSTTSS) form a disordered region. Positions 934-946 (STTPSTSTSTTSS) are enriched in low complexity. LRR repeat units lie at residues 971-984 (LNKLNMLSLDSRRI), 985-1007 (SDLKELYLDHNCISSIPVSILKE), 1008-1031 (LKNLQILDLSNNQLSSLPSEISEM), 1033-1056 (ELKLLNVSHNNLSSLPIELGTLCK), 1058-1077 (NHLDISFNFIETINVNSLSQ), 1078-1101 (LVNLKVLMMQRNYFNRLPIEIFTR), 1128-1151 (AIKATKLDLSDCGLSALPIEIGSI), 1152-1174 (SSLIELDLTNNRIKDLPPQIGKL), 1175-1197 (SSLQTLNLSNNAIESLPWQLSQL), and 1199-1222 (TLKVLNITGNPISFDGASNAKISI). Positions 1244-1464 (KEKPCMRMKL…NHIVKLGKAE (221 aa)) constitute a Roc domain. GTP is bound by residues 1257–1264 (GQENVGKT), 1348–1352 (DFAGQ), and 1407–1410 (THLD). Positions 1473-1604 (RSYFQLENLI…KFEIVHPLPD (132 aa)) constitute a COR 1 domain. 2 disordered regions span residues 1605–1665 (PKAT…SLLN) and 1688–1711 (DQSTSPSNSTTPSPNTSSNNFSDS). 3 stretches are compositionally biased toward low complexity: residues 1610-1645 (SSSSSSPSTTQKSLNNSGSNLKSSGSAISTSSSSTT), 1653-1665 (RTNSTTNTTSLLN), and 1688-1707 (DQSTSPSNSTTPSPNTSSNN). Positions 1717–1790 (KSSTKHLVPI…VKEFWKNGLL (74 aa)) constitute a COR 2 domain. A compositionally biased stretch (low complexity) spans 1886-2008 (SQQQHHQQQQ…LNPDSTSSSN (123 aa)). Disordered regions lie at residues 1886–2011 (SQQQ…NETS) and 2050–2070 (RNTNKPKINGTTGSGSSSSIV). Polar residues predominate over residues 2050 to 2059 (RNTNKPKING). Residues 2175 to 2440 (LEIIEKVGEG…PTFIDIHSRL (266 aa)) enclose the Protein kinase domain. Residues 2181-2189 (VGEGGFGIV) and Lys-2202 each bind ATP. Residue Asp-2300 is the Proton acceptor of the active site. Composition is skewed to low complexity over residues 2452–2490 (TTTNSAKSTISTGFNSNSGATTTTKPKSSTISSGSGTTS), 2583–2654 (LKTP…SPIS), 2669–2685 (TTQTTSTPPTNQTPNPT), and 2694–2704 (SSLSSNSINKP). Disordered stretches follow at residues 2452–2498 (TTTN…HPQL) and 2544–2800 (AGGN…AIPK). The span at 2705-2723 (PSKPLPTPGGVTSPPPPPT) shows a compositional bias: pro residues. The segment covering 2730-2756 (IKFNSISAGNKTIGQSSTLPSSTLKQF) has biased composition (polar residues). The segment covering 2757–2787 (TANNNTSPSGSSSLPNSTVSSPSSSFLLRPT) has biased composition (low complexity).

This sequence belongs to the protein kinase superfamily. TKL Ser/Thr protein kinase family. ROCO subfamily.

It carries out the reaction L-seryl-[protein] + ATP = O-phospho-L-seryl-[protein] + ADP + H(+). It catalyses the reaction L-threonyl-[protein] + ATP = O-phospho-L-threonyl-[protein] + ADP + H(+). Functionally, may act as a serine/threonine-protein kinase and guanine-nucleotide releasing factor. This is Probable serine/threonine-protein kinase roco5 (roco5) from Dictyostelium discoideum (Social amoeba).